Reading from the N-terminus, the 185-residue chain is TATA-box-binding protein (185 aa).

2 repeat units span residues 8-84 and 99-175.

It belongs to the TBP family.

Functionally, general factor that plays a role in the activation of archaeal genes transcribed by RNA polymerase. Binds specifically to the TATA box promoter element which lies close to the position of transcription initiation. The polypeptide is TATA-box-binding protein (Thermococcus sibiricus (strain DSM 12597 / MM 739)).